The following is a 176-amino-acid chain: dCTP deaminase (176 aa).

Residues 99–104 (RSTLAR) and aspartate 115 each bind dCTP. Glutamate 125 (proton donor/acceptor) is an active-site residue. Glutamine 163 is a dCTP binding site.

The protein belongs to the dCTP deaminase family. Homotrimer.

It carries out the reaction dCTP + H2O + H(+) = dUTP + NH4(+). It participates in pyrimidine metabolism; dUMP biosynthesis; dUMP from dCTP (dUTP route): step 1/2. Catalyzes the deamination of dCTP to dUTP. The polypeptide is dCTP deaminase (Pyrobaculum aerophilum (strain ATCC 51768 / DSM 7523 / JCM 9630 / CIP 104966 / NBRC 100827 / IM2)).